We begin with the raw amino-acid sequence, 622 residues long: Auxin response factor 11 (622 aa).

Positions 145-247 (FVKILTASDT…DLRVGVRRLA (103 aa)) form a DNA-binding region, TF-B3. 2 disordered regions span residues 358–398 (SIQR…ISEI) and 483–513 (SNIS…TRSR). 2 stretches are compositionally biased toward polar residues: residues 376–387 (SALTPTPTQQQS) and 483–511 (SNIS…TSTR). Positions 511–594 (RSRIKVQMQG…KKLFIYPSDE (84 aa)) constitute a PB1 domain.

It belongs to the ARF family. Homodimers and heterodimers.

The protein resides in the nucleus. Auxin response factors (ARFs) are transcriptional factors that bind specifically to the DNA sequence 5'-TGTCTC-3' found in the auxin-responsive promoter elements (AuxREs). Could act as transcriptional activator or repressor. Formation of heterodimers with Aux/IAA proteins may alter their ability to modulate early auxin response genes expression. The polypeptide is Auxin response factor 11 (ARF11) (Arabidopsis thaliana (Mouse-ear cress)).